Reading from the N-terminus, the 183-residue chain is Inner membrane-spanning protein YciB (183 aa).

Transmembrane regions (helical) follow at residues 19–39 (LYGVQQAAITLVIATVIQLIV), 53–73 (IMGIFAVFFGILTAYFNDLNF), 76–96 (WKVTIINGLFAAVLLVSQFVF), 121–141 (LGWAGFFIICMLLNIVISYYF), and 151–171 (TFGFTGLSLIAAIATGVYLYP).

It belongs to the YciB family.

It is found in the cell inner membrane. Plays a role in cell envelope biogenesis, maintenance of cell envelope integrity and membrane homeostasis. The sequence is that of Inner membrane-spanning protein YciB from Actinobacillus pleuropneumoniae serotype 5b (strain L20).